A 512-amino-acid chain; its full sequence is MVNIRPDEISSIIRKQIEQYNQEVKVVNIGTVLQVGDGIARIYGLDKVMAGELLEFEDGTVGIALNLESDNVGAVLMGDGLNIQEGSSVKATGKIAQIPVSDGYLGRVVNALGRPIDGKGDIPASEYRLIESPAPGIISRRSVYEPMQTGLIAIDAMIPIGRGQRELIIGDRQTGKTAVATDTILNQKGQNVICVYVAIGQKASSIAQVLNTFEERGAMDYTIIVAETADAPATLQYLAPYTGAAIAEYFMYRGKHTLVIYDDLSKQAQAYRQMSLLLRRPPGREAYPGDVFYLHSRLLERAAKLSSQLGEGSMTALPIVETQAGDVSAYIPTNVISITDGQIFLSADLFNAGIRPAINVGISVSRVGSAAQIKAMKQVAGKLKLELAQFAELEAFSQFASDLDKATQNQLARGQRLRELLKQSQAAPLAVEEQVATIYTGVNGYLDVIEVAQVRRFLTELRQYLGTNKPKFGEIIREKKAVTEEAESLLKAAIKEHTEAFLLQEESVGSRS.

170-177 provides a ligand contact to ATP; sequence GDRQTGKT.

Belongs to the ATPase alpha/beta chains family. In terms of assembly, F-type ATPases have 2 components, CF(1) - the catalytic core - and CF(0) - the membrane proton channel. CF(1) has five subunits: alpha(3), beta(3), gamma(1), delta(1), epsilon(1). CF(0) has four main subunits: a, b, b' and c.

It is found in the plastid. The protein localises to the chloroplast thylakoid membrane. It catalyses the reaction ATP + H2O + 4 H(+)(in) = ADP + phosphate + 5 H(+)(out). In terms of biological role, produces ATP from ADP in the presence of a proton gradient across the membrane. The alpha chain is a regulatory subunit. In Staurastrum punctulatum (Green alga), this protein is ATP synthase subunit alpha, chloroplastic.